The primary structure comprises 227 residues: MHIERLDFENSPYLGVFGVATDRVVLIREGLQEKKLEVIRETLKVPVIEVSVMKSRIIGTLATGNSNAIILPWYVWDAEIERIKKALSEYGIDMEVVPFRSKYTALGNLILTNDKAALVSAKFSRKEAQEIGEILGVEVERGVIAGLHAVGSAGVVTNKGGLVHPETSDEELEWLSDLFKVDVYVGTANMGVPYVGTCMLANSNGVVVGHLTTGPEIVKIEEALGFV.

This sequence belongs to the eIF-6 family.

In terms of biological role, binds to the 50S ribosomal subunit and prevents its association with the 30S ribosomal subunit to form the 70S initiation complex. In Pyrococcus horikoshii (strain ATCC 700860 / DSM 12428 / JCM 9974 / NBRC 100139 / OT-3), this protein is Translation initiation factor 6.